A 386-amino-acid chain; its full sequence is Patatin group M-3 (386 aa).

Positions 1–23 (MATTKSFLILFFMILATTSSTCA) are cleaved as a signal peptide. Residues 32–229 (LSIDGGGIKG…TVGDPALLSL (198 aa)) enclose the PNPLA domain. Residues 36 to 41 (GGGIKG) carry the GXGXXG motif. A GXSXG motif is present at residues 75–79 (GTSTG). Ser-77 functions as the Nucleophile in the catalytic mechanism. Asn-115 is a glycosylation site (N-linked (GlcNAc...) asparagine). Asp-215 functions as the Proton acceptor in the catalytic mechanism. Positions 215–217 (DGG) match the DGA/G motif. A coiled-coil region spans residues 321 to 384 (ENALTGTTTE…DRKKLRANKA (64 aa)).

This sequence belongs to the patatin family. Tuber.

The protein localises to the vacuole. Its function is as follows. Probable lipolytic acyl hydrolase (LAH), an activity which is thought to be involved in the response of tubers to pathogens. This Solanum tuberosum (Potato) protein is Patatin group M-3.